A 208-amino-acid chain; its full sequence is uncharacterized protein (208 aa).

Positions Met1–Ala34 are cleaved as a signal peptide.

This is an uncharacterized protein from Sinorhizobium fredii (strain NBRC 101917 / NGR234).